The chain runs to 575 residues: Interleukin-1 receptor-like 2 (575 aa).

The signal sequence occupies residues 1 to 19 (MWSLLLCGLSIALPLSVTA). 3 consecutive Ig-like C2-type domains span residues 20–111 (DGCK…VNLT), 126–211 (PNLS…VLNG), and 222–318 (YGGS…MCHA). Residues 20 to 335 (DGCKDIFMKN…ILQLPAPDFR (316 aa)) are Extracellular-facing. 9 N-linked (GlcNAc...) asparagine glycosylation sites follow: asparagine 41, asparagine 59, asparagine 109, asparagine 127, asparagine 184, asparagine 234, asparagine 250, asparagine 266, and asparagine 299. A disulfide bond links cysteine 42 and cysteine 95. Cysteine 146 and cysteine 195 are disulfide-bonded. An intrachain disulfide couples cysteine 249 to cysteine 316. Residues 336 to 356 (AYLIGGLIALVAVAVSVVYIY) form a helical membrane-spanning segment. Residues 357 to 575 (NIFKIDIVLW…RRKKCTLTTG (219 aa)) lie on the Cytoplasmic side of the membrane. A TIR domain is found at 381–536 (KLYDAYVLYP…KFWKTVRYHM (156 aa)). Glutamate 467 is an active-site residue.

It belongs to the interleukin-1 receptor family. Interacts with IL1RAP; the association is enhanced by IL36B indicative for an functional signaling complex and inhibited by IL36RN. As to expression, expressed in synovial fibroblasts and articular chondrocytes. Expressed in keratinocytes and monocyte-derived dendritic cells. Expressed in monocytes and myeloid dendritic cells; at protein level.

Its subcellular location is the membrane. The enzyme catalyses NAD(+) + H2O = ADP-D-ribose + nicotinamide + H(+). Its function is as follows. Receptor for interleukin-36 (IL36A, IL36B and IL36G). After binding to interleukin-36 associates with the coreceptor IL1RAP to form the interleukin-36 receptor complex which mediates interleukin-36-dependent activation of NF-kappa-B, MAPK and other pathways. The IL-36 signaling system is thought to be present in epithelial barriers and to take part in local inflammatory response; it is similar to the IL-1 system. Seems to be involved in skin inflammatory response by induction of the IL-23/IL-17/IL-22 pathway. This is Interleukin-1 receptor-like 2 (IL1RL2) from Homo sapiens (Human).